We begin with the raw amino-acid sequence, 301 residues long: Putative S-adenosyl-L-methionine-dependent methyltransferase BCG_0775c (301 aa).

S-adenosyl-L-methionine is bound by residues aspartate 130 and 159–160; that span reads DL.

The protein belongs to the UPF0677 family.

Functionally, exhibits S-adenosyl-L-methionine-dependent methyltransferase activity. The polypeptide is Putative S-adenosyl-L-methionine-dependent methyltransferase BCG_0775c (Mycobacterium bovis (strain BCG / Pasteur 1173P2)).